The sequence spans 560 residues: Potassium-transporting ATPase potassium-binding subunit (560 aa).

Helical transmembrane passes span phenylalanine 6–leucine 26, leucine 63–cysteine 83, glycine 132–isoleucine 152, leucine 175–isoleucine 195, leucine 250–phenylalanine 270, alanine 282–glutamate 302, phenylalanine 327–valine 347, alanine 356–valine 376, glycine 379–glycine 399, methionine 416–methionine 436, leucine 483–isoleucine 503, and glycine 524–isoleucine 544.

Belongs to the KdpA family. The system is composed of three essential subunits: KdpA, KdpB and KdpC.

The protein localises to the cell inner membrane. In terms of biological role, part of the high-affinity ATP-driven potassium transport (or Kdp) system, which catalyzes the hydrolysis of ATP coupled with the electrogenic transport of potassium into the cytoplasm. This subunit binds the periplasmic potassium ions and delivers the ions to the membrane domain of KdpB through an intramembrane tunnel. This Cronobacter sakazakii (strain ATCC BAA-894) (Enterobacter sakazakii) protein is Potassium-transporting ATPase potassium-binding subunit.